The following is a 409-amino-acid chain: 1-deoxy-D-xylulose 5-phosphate reductoisomerase (409 aa).

NADPH is bound by residues threonine 5, glycine 6, serine 7, isoleucine 8, glycine 31, asparagine 33, and asparagine 122. Lysine 123 is a 1-deoxy-D-xylulose 5-phosphate binding site. Glutamate 124 contacts NADPH. Aspartate 148 contacts Mn(2+). 4 residues coordinate 1-deoxy-D-xylulose 5-phosphate: serine 149, glutamate 150, serine 186, and histidine 209. Glutamate 150 contacts Mn(2+). Glycine 215 contacts NADPH. Serine 222, asparagine 227, lysine 228, and glutamate 231 together coordinate 1-deoxy-D-xylulose 5-phosphate. Glutamate 231 lines the Mn(2+) pocket.

It belongs to the DXR family. Mg(2+) is required as a cofactor. It depends on Mn(2+) as a cofactor.

It catalyses the reaction 2-C-methyl-D-erythritol 4-phosphate + NADP(+) = 1-deoxy-D-xylulose 5-phosphate + NADPH + H(+). The protein operates within isoprenoid biosynthesis; isopentenyl diphosphate biosynthesis via DXP pathway; isopentenyl diphosphate from 1-deoxy-D-xylulose 5-phosphate: step 1/6. Functionally, catalyzes the NADPH-dependent rearrangement and reduction of 1-deoxy-D-xylulose-5-phosphate (DXP) to 2-C-methyl-D-erythritol 4-phosphate (MEP). This is 1-deoxy-D-xylulose 5-phosphate reductoisomerase from Parasynechococcus marenigrum (strain WH8102).